The sequence spans 396 residues: Tryptophan synthase beta chain (396 aa).

K86 carries the post-translational modification N6-(pyridoxal phosphate)lysine.

This sequence belongs to the TrpB family. In terms of assembly, tetramer of two alpha and two beta chains. It depends on pyridoxal 5'-phosphate as a cofactor.

It carries out the reaction (1S,2R)-1-C-(indol-3-yl)glycerol 3-phosphate + L-serine = D-glyceraldehyde 3-phosphate + L-tryptophan + H2O. It participates in amino-acid biosynthesis; L-tryptophan biosynthesis; L-tryptophan from chorismate: step 5/5. Its function is as follows. The beta subunit is responsible for the synthesis of L-tryptophan from indole and L-serine. This Yersinia enterocolitica serotype O:8 / biotype 1B (strain NCTC 13174 / 8081) protein is Tryptophan synthase beta chain.